A 101-amino-acid chain; its full sequence is Chaperone modulatory protein CbpM (101 aa).

The protein belongs to the CbpM family.

Interacts with CbpA and inhibits both the DnaJ-like co-chaperone activity and the DNA binding activity of CbpA. Together with CbpA, modulates the activity of the DnaK chaperone system. Does not inhibit the co-chaperone activity of DnaJ. The sequence is that of Chaperone modulatory protein CbpM from Salmonella paratyphi A (strain ATCC 9150 / SARB42).